Here is a 403-residue protein sequence, read N- to C-terminus: Vitamin D(3) 25-hydroxylase (403 aa).

Heme is bound at residue Cys347.

The protein belongs to the cytochrome P450 family. Requires heme as cofactor.

It localises to the cytoplasm. It carries out the reaction 5beta-cholestane-3alpha,7alpha,12alpha-triol + 6 reduced [adrenodoxin] + 3 O2 + 5 H(+) = (25R)-3alpha,7alpha,12alpha-trihydroxy-5beta-cholestan-26-oate + 6 oxidized [adrenodoxin] + 4 H2O. Its activity is regulated as follows. Activated by partially methylated beta-cyclodextrin. In terms of biological role, hydroxylates vitamin D(3) into 25-hydroxyvitamin D(3) and 1-alpha,25-dihydroxyvitamin D(3), its physiologically active forms. It first hydroxylates the C-25 position of vitamin D(3) to form 25-hydroxyvitamin D(3), then subsequently hydroxylates the C-1-alpha position to form 1-alpha,25-dihydroxyvitamin D(3). Also displays 25-hydroxylase activity on vitamin D(2) and 7-dehydrocholesterol. May play a role in the biosynthesis of steroid metabolic intermediates. The polypeptide is Vitamin D(3) 25-hydroxylase (Pseudonocardia autotrophica (Amycolata autotrophica)).